A 576-amino-acid polypeptide reads, in one-letter code: Arginine--tRNA ligase (576 aa).

Positions 122–132 match the 'HIGH' region motif; it reads PNVAKEMHVGH.

It belongs to the class-I aminoacyl-tRNA synthetase family. Monomer.

It is found in the cytoplasm. It carries out the reaction tRNA(Arg) + L-arginine + ATP = L-arginyl-tRNA(Arg) + AMP + diphosphate. The polypeptide is Arginine--tRNA ligase (Pectobacterium carotovorum subsp. carotovorum (strain PC1)).